A 747-amino-acid chain; its full sequence is H(+)/Cl(-) exchange transporter 4 (747 aa).

Residues 1-50 (MDFLDEPFPDVGTYEDFHTIDWLREKSRDTDRHRKITSKSKESIWEFIKS) are required for localization in the endoplasmic reticulum. The Cytoplasmic portion of the chain corresponds to 1–54 (MDFLDEPFPDVGTYEDFHTIDWLREKSRDTDRHRKITSKSKESIWEFIKSLLDA). The next 2 helical transmembrane spans lie at 55-92 (WSGW…VCLS) and 138-161 (LNYL…VRVF). The Selectivity filter part_1 signature appears at 167-171 (GSGIP). Ser168 provides a ligand contact to chloride. Residues 170–177 (IPEIKTIL) constitute an intramembrane region (helical). Helical transmembrane passes span 187–205 (GKWT…VSSG) and 211–230 (EGPL…SLFS). Residues 209-213 (GKEGP) carry the Selectivity filter part_2 motif. 2 intramembrane regions (helical) span residues 242 to 254 (VLSA…VSVA) and 258 to 266 (PIGGVLFSL). The next 5 helical transmembrane spans lie at 278 to 296 (LWRS…RSIN), 320 to 345 (FPFI…AWCR), 352 to 372 (LGKY…IIAY), 429 to 449 (MWQL…TFGM), and 454 to 473 (GLFI…VGIG). The Selectivity filter part_3 signature appears at 454-458 (GLFIP). Phe456 contacts chloride. 2 intramembrane regions (helical) span residues 501–515 (GLYA…LGGV) and 519–530 (TVSLVVIMFELT). Positions 531-534 (GGLE) form an intramembrane region, note=Loop between two helices. A helical transmembrane segment spans residues 535 to 553 (YIVPLMAAAVTSKWVADAF). The Cytoplasmic portion of the chain corresponds to 554–747 (GKEGIYEAHI…NQDPESIIFN (194 aa)). Tyr559 provides a ligand contact to chloride. Residues 587–653 (MRPRRGEPPL…AIKNARQRQE (67 aa)) enclose the CBS 1 domain. Residues Ser597 and 618–620 (YNG) contribute to the ATP site. Residues 654–683 (GIVSNSIMYFTEEPPELPANSPHPLKLRRI) form a required for localization in the endoplasmic reticulum region. Residues 684–742 (LNLSPFTVTDHTPMETVVDIFRKLGLRQCLVTRSGRLLGIITKKDVLRHMAQMANQDPE) enclose the CBS 2 domain. 725–728 (TKKD) contacts ATP.

This sequence belongs to the chloride channel (TC 2.A.49) family. ClC-4/CLCN4 subfamily. Strongly expressed in liver and brain, but also in heart, muscle, kidney and spleen.

It is found in the early endosome membrane. Its subcellular location is the late endosome membrane. The protein resides in the endoplasmic reticulum membrane. The protein localises to the lysosome membrane. It localises to the recycling endosome membrane. In terms of biological role, strongly outwardly rectifying, electrogenic H(+)/Cl(-)exchanger which mediates the exchange of chloride ions against protons. The CLC channel family contains both chloride channels and proton-coupled anion transporters that exchange chloride or another anion for protons. The presence of conserved gating glutamate residues is typical for family members that function as antiporters. The sequence is that of H(+)/Cl(-) exchange transporter 4 (Clcn4) from Rattus norvegicus (Rat).